We begin with the raw amino-acid sequence, 199 residues long: Protein ASYMMETRIC LEAVES 2 (199 aa).

Residues Ser-8–Leu-109 form the LOB domain.

This sequence belongs to the LOB domain-containing protein family. As to quaternary structure, homo- and heterodimer with AS1. Interacts with AS1. Part of the AS1 repressor complex composed of AS1, LBD6/AS2 and HDA6. Interacts with LFR. In terms of tissue distribution, expressed in young shoots, roots, stems, leaves, flowers and adaxial domains of cotyledonary and leaves primordia.

It localises to the nucleus. Negative regulator of cell proliferation in the adaxial side of leaves. Regulates the formation of a symmetric lamina and the establishment of venation. Positively regulates LATERAL ORGAN BOUNDARIES (LOB) within the shoot apex, and the class III HD-ZIP genes REV, PHB, and PHV. Interacts directly with ASYMMETRIC LEAVES 1 (AS1) to repress the knox homeobox genes KNAT1, KNAT2, and KNAT6 and the abaxial determinants ARF3, KAN2 and YAB5. May act in parallel with the RDR6-SGS3-AGO7 pathway, an endogenous RNA silencing pathway, to regulate the leaf morphogenesis. Required for the binding of AS1 to the KNOX genes. Involved in leaf polarity establishment by functioning cooperatively with RH10 or RID2 to repress abaxial genes ARF3, ARF4, KAN1, KAN2, YAB1 and YAB5, and the knox homeobox genes KNAT1, KNAT2, KNAT6, and STM to promote adaxial development in leaf primordia at shoot apical meristems at high temperatures. The protein is Protein ASYMMETRIC LEAVES 2 of Arabidopsis thaliana (Mouse-ear cress).